We begin with the raw amino-acid sequence, 296 residues long: MIPIVLQTDFPNLKLVNKGKVRDIYDLGEHLLIVTSDRISAFDVVMNEGIPYKGFVLTQISKFWFDAFSDIVPHHLVSTEVDDFPAETRPYRDQLEGRSMLVRKAEPLPIECIVRGYLAGSGWKEYRQQGTVCGIALPPGMVESQKLPEPIFTPSTKAELGAHDENISFEKATELCGGDIAAQAREVALTIYGRARDEMAAKGIIVADTKFEFGLRDGRLMWIDEALTPDSSRFWPQDEYRQGGAQPSFDKQFLRDYLETLDWNKQAPAPTLPDDIVLKTSEKYLEALFRITGLKP.

The protein belongs to the SAICAR synthetase family.

The enzyme catalyses 5-amino-1-(5-phospho-D-ribosyl)imidazole-4-carboxylate + L-aspartate + ATP = (2S)-2-[5-amino-1-(5-phospho-beta-D-ribosyl)imidazole-4-carboxamido]succinate + ADP + phosphate + 2 H(+). The protein operates within purine metabolism; IMP biosynthesis via de novo pathway; 5-amino-1-(5-phospho-D-ribosyl)imidazole-4-carboxamide from 5-amino-1-(5-phospho-D-ribosyl)imidazole-4-carboxylate: step 1/2. The protein is Phosphoribosylaminoimidazole-succinocarboxamide synthase of Syntrophotalea carbinolica (strain DSM 2380 / NBRC 103641 / GraBd1) (Pelobacter carbinolicus).